A 236-amino-acid polypeptide reads, in one-letter code: MASSNFLVLLLFALFVIPQGLANYDKPPVYQPPVYKPPVEKPPVYKPPVEKPPVYKPPVYKPPVEKPPVYKPPVVKPPVYKPPVYKPPVYKPPVEKPPVYKPPVYKPPVYKPPVVKPPVYKPPVYKPPVEKPPVYKPPVYKPPVEKPPVYKPPVEKPPVYKPPVYKPPVYKPPVVKPPVYKPPVYKPPVYKPPVEKPPVYKPPVYKPPVEKPPVYKPPVYKPPVEKPPVYGPPHHP.

The signal sequence occupies residues 1–22 (MASSNFLVLLLFALFVIPQGLA). A run of 41 repeats spans residues 27 to 31 (PPVYQ), 32 to 36 (PPVYK), 37 to 41 (PPVEK), 42 to 46 (PPVYK), 47 to 51 (PPVEK), 52 to 56 (PPVYK), 57 to 61 (PPVYK), 62 to 66 (PPVEK), 67 to 71 (PPVYK), 72 to 76 (PPVVK), 77 to 81 (PPVYK), 82 to 86 (PPVYK), 87 to 91 (PPVYK), 92 to 96 (PPVEK), 97 to 101 (PPVYK), 102 to 106 (PPVYK), 107 to 111 (PPVYK), 112 to 116 (PPVVK), 117 to 121 (PPVYK), 122 to 126 (PPVYK), 127 to 131 (PPVEK), 132 to 136 (PPVYK), 137 to 141 (PPVYK), 142 to 146 (PPVEK), 147 to 151 (PPVYK), 152 to 156 (PPVEK), 157 to 161 (PPVYK), 162 to 166 (PPVYK), 167 to 171 (PPVYK), 172 to 176 (PPVVK), 177 to 181 (PPVYK), 182 to 186 (PPVYK), 187 to 191 (PPVYK), 192 to 196 (PPVEK), 197 to 201 (PPVYK), 202 to 206 (PPVYK), 207 to 211 (PPVEK), 212 to 216 (PPVYK), 217 to 221 (PPVYK), 222 to 226 (PPVEK), and 227 to 231 (PPVYG). Residues 27 to 236 (PPVYQPPVYK…PPVYGPPHHP (210 aa)) form a 42 X 5 AA approximate tandem repeats of P-P-V-[EYV]-[KQG] region. The interval 143-177 (PVEKPPVYKPPVEKPPVYKPPVYKPPVYKPPVVKP) is disordered. Positions 204-236 (VYKPPVEKPPVYKPPVYKPPVEKPPVYGPPHHP) are disordered. Residues 232–236 (PPHHP) form a 42; approximate repeat.

This sequence belongs to the plant proline-rich protein superfamily. ENOD12 family.

The protein localises to the secreted. It is found in the cell wall. Its function is as follows. This is a developmentally regulated putative cell wall protein. This is Repetitive proline-rich cell wall protein (PRP) from Medicago sativa (Alfalfa).